The following is a 468-amino-acid chain: WD repeat-containing protein 55 homolog (468 aa).

The disordered stretch occupies residues 1–107; it reads MRNFNSPKFG…VPKRVIDDYD (107 aa). Acidic residues-rich tracts occupy residues 15–26, 41–58, and 67–91; these read DDSDDDDFDSGT, PITEEIEEIEGDDEEYNP, and SDDEDDSDDSDSDKEQENGGEDGED. WD repeat units lie at residues 134–173, 178–217, 221–259, 262–301, 304–343, and 388–427; these read KTEDFVTDLCFHPDQDLLAVGTTTGDVIVYKFTNDECTIV, THTKSVRDVEFNADGDLLISTARDRSIMVTDVETGKLKRF, AHEEPVYTMSMITEHTFATGDDGGVLKLWDLRQKDPVFK, EVEDFISCIITNEQKKYLLMTSGDGYLTTINIPQRKMYVQ, PYEEELTCMGVFRRDSKLVVGSSKGNFYTFNWGQFGYHCD, and QHSLAVETMDINSTGELIASSSHDNDIRFWNIKYFEEFDD.

It belongs to the WD repeat WDR55 family.

This Aedes aegypti (Yellowfever mosquito) protein is WD repeat-containing protein 55 homolog.